The following is a 1042-amino-acid chain: Starch synthase 3, chloroplastic/amyloplastic (1042 aa).

The N-terminal 44 residues, 1–44 (MISYFLNQDFSRKKQGRMAASGPKSSGPRGFGRRTTVGSAQKRT), are a transit peptide targeting the chloroplast. Residues 1–63 (MISYFLNQDF…NATSTATNEV (63 aa)) are disordered. Over residues 54 to 63 (NATSTATNEV) the composition is skewed to polar residues. Positions 247–302 (ENFLLEEKLREQEKLAKEEAERERQKEEKRRIEAQKAAIEADRAQAKAETQKRREL) form a coiled coil. ADP-alpha-D-glucose is bound at residue Lys-608.

The protein belongs to the glycosyltransferase 1 family. Bacterial/plant glycogen synthase subfamily. Expressed in leaves and flowers.

It localises to the plastid. It is found in the chloroplast. Its subcellular location is the amyloplast. It carries out the reaction [(1-&gt;4)-alpha-D-glucosyl](n) + ADP-alpha-D-glucose = [(1-&gt;4)-alpha-D-glucosyl](n+1) + ADP + H(+). The protein operates within glycan biosynthesis; starch biosynthesis. Involved in the synthesis of glycan chains within amylopectin in leaves. May play a regulatory role in the control of starch accumulation in plastids. The chain is Starch synthase 3, chloroplastic/amyloplastic (SS3) from Arabidopsis thaliana (Mouse-ear cress).